The chain runs to 179 residues: Large ribosomal subunit protein uL6 (179 aa).

The protein belongs to the universal ribosomal protein uL6 family. As to quaternary structure, part of the 50S ribosomal subunit.

This protein binds to the 23S rRNA, and is important in its secondary structure. It is located near the subunit interface in the base of the L7/L12 stalk, and near the tRNA binding site of the peptidyltransferase center. The chain is Large ribosomal subunit protein uL6 from Methylacidiphilum infernorum (isolate V4) (Methylokorus infernorum (strain V4)).